Here is a 248-residue protein sequence, read N- to C-terminus: Exosome complex component Rrp41 (248 aa).

It belongs to the RNase PH family. Rrp41 subfamily. In terms of assembly, component of the archaeal exosome complex. Forms a hexameric ring-like arrangement composed of 3 Rrp41-Rrp42 heterodimers. The hexameric ring associates with a trimer of Rrp4 and/or Csl4 subunits.

The protein resides in the cytoplasm. Catalytic component of the exosome, which is a complex involved in RNA degradation. Has 3'-&gt;5' exoribonuclease activity. Can also synthesize heteromeric RNA-tails. This is Exosome complex component Rrp41 from Thermoplasma volcanium (strain ATCC 51530 / DSM 4299 / JCM 9571 / NBRC 15438 / GSS1).